Here is an 825-residue protein sequence, read N- to C-terminus: 5-methyltetrahydropteroyltriglutamate--homocysteine methyltransferase (825 aa).

The 5-methyltetrahydropteroyltri-L-glutamate site is built by Lys-19 and Asn-148. L-homocysteine is bound by residues 498–500 (IGS) and Glu-551. L-methionine is bound by residues 498-500 (IGS) and Glu-551. Residues Asp-556, Tyr-579, 582-583 (RC), and Trp-628 each bind 5-methyltetrahydropteroyltri-L-glutamate. Asp-666 provides a ligand contact to L-homocysteine. Asp-666 contributes to the L-methionine binding site. Residues His-708, Cys-710, and Glu-732 each contribute to the Zn(2+) site. His-761 acts as the Proton donor in catalysis. Cys-793 is a Zn(2+) binding site.

It belongs to the vitamin-B12 independent methionine synthase family. Requires Zn(2+) as cofactor.

The catalysed reaction is 5-methyltetrahydropteroyltri-L-glutamate + L-homocysteine = tetrahydropteroyltri-L-glutamate + L-methionine. It functions in the pathway amino-acid biosynthesis; L-methionine biosynthesis via de novo pathway; L-methionine from L-homocysteine (MetE route): step 1/1. Catalyzes the transfer of a methyl group from 5-methyltetrahydrofolate to homocysteine resulting in methionine formation. This Dictyostelium discoideum (Social amoeba) protein is 5-methyltetrahydropteroyltriglutamate--homocysteine methyltransferase (metE).